The following is a 295-amino-acid chain: Bifunctional protein FolD (295 aa).

Residues 166–168, S191, and I232 contribute to the NADP(+) site; that span reads GRS.

This sequence belongs to the tetrahydrofolate dehydrogenase/cyclohydrolase family. Homodimer.

The catalysed reaction is (6R)-5,10-methylene-5,6,7,8-tetrahydrofolate + NADP(+) = (6R)-5,10-methenyltetrahydrofolate + NADPH. The enzyme catalyses (6R)-5,10-methenyltetrahydrofolate + H2O = (6R)-10-formyltetrahydrofolate + H(+). It functions in the pathway one-carbon metabolism; tetrahydrofolate interconversion. Functionally, catalyzes the oxidation of 5,10-methylenetetrahydrofolate to 5,10-methenyltetrahydrofolate and then the hydrolysis of 5,10-methenyltetrahydrofolate to 10-formyltetrahydrofolate. This is Bifunctional protein FolD from Wolbachia sp. subsp. Brugia malayi (strain TRS).